A 698-amino-acid chain; its full sequence is Protein arginine N-methyltransferase 7 (698 aa).

SAM-dependent MTase PRMT-type domains follow at residues 14–357 (QNTW…YSLW) and 366–698 (EKPA…EKSE).

Belongs to the class I-like SAM-binding methyltransferase superfamily. Protein arginine N-methyltransferase family. PRMT7 subfamily.

Essential arginine methyltransferase that can both catalyze the formation of omega-N monomethylarginine (MMA) and symmetrical dimethylarginine (sDMA). Specifically mediates the symmetrical dimethylation of arginine residues in the small nuclear ribonucleoproteins SmD1 and SmD3. In Drosophila mojavensis (Fruit fly), this protein is Protein arginine N-methyltransferase 7 (Art7).